The chain runs to 177 residues: dCTP deaminase (177 aa).

DCTP contacts are provided by residues 100-105 and D116; that span reads RSSIAR. E126 serves as the catalytic Proton donor/acceptor. DCTP is bound by residues Y159 and Q166.

The protein belongs to the dCTP deaminase family. Homotrimer.

The enzyme catalyses dCTP + H2O + H(+) = dUTP + NH4(+). Its pathway is pyrimidine metabolism; dUMP biosynthesis; dUMP from dCTP (dUTP route): step 1/2. Its function is as follows. Catalyzes the deamination of dCTP to dUTP. The sequence is that of dCTP deaminase from Korarchaeum cryptofilum (strain OPF8).